A 273-amino-acid chain; its full sequence is Citrate lyase subunit beta-like protein (273 aa).

2 residues coordinate substrate: arginine 64 and glutamate 112. Mg(2+)-binding residues include glutamate 112 and aspartate 138.

This sequence belongs to the HpcH/HpaI aldolase family. Citrate lyase beta subunit-like subfamily. In terms of assembly, homotrimer. Mg(2+) serves as cofactor.

May play a role in fatty acid biosynthesis. The polypeptide is Citrate lyase subunit beta-like protein (citE) (Mycobacterium tuberculosis (strain CDC 1551 / Oshkosh)).